A 305-amino-acid polypeptide reads, in one-letter code: UDP-3-O-acyl-N-acetylglucosamine deacetylase (305 aa).

The Zn(2+) site is built by H79, H238, and D242. H265 serves as the catalytic Proton donor.

The protein belongs to the LpxC family. It depends on Zn(2+) as a cofactor.

The enzyme catalyses a UDP-3-O-[(3R)-3-hydroxyacyl]-N-acetyl-alpha-D-glucosamine + H2O = a UDP-3-O-[(3R)-3-hydroxyacyl]-alpha-D-glucosamine + acetate. It participates in glycolipid biosynthesis; lipid IV(A) biosynthesis; lipid IV(A) from (3R)-3-hydroxytetradecanoyl-[acyl-carrier-protein] and UDP-N-acetyl-alpha-D-glucosamine: step 2/6. In terms of biological role, catalyzes the hydrolysis of UDP-3-O-myristoyl-N-acetylglucosamine to form UDP-3-O-myristoylglucosamine and acetate, the committed step in lipid A biosynthesis. This chain is UDP-3-O-acyl-N-acetylglucosamine deacetylase, found in Escherichia coli O45:K1 (strain S88 / ExPEC).